The chain runs to 245 residues: tRNA (guanine-N(7)-)-methyltransferase (245 aa).

Positions 71, 96, 123, and 146 each coordinate S-adenosyl-L-methionine. Asp146 is a catalytic residue. Lys150 lines the substrate pocket. Positions Lys152 to Arg157 are interaction with RNA. Residues Asp182 and Thr224–Glu227 each bind substrate.

The protein belongs to the class I-like SAM-binding methyltransferase superfamily. TrmB family.

The catalysed reaction is guanosine(46) in tRNA + S-adenosyl-L-methionine = N(7)-methylguanosine(46) in tRNA + S-adenosyl-L-homocysteine. It participates in tRNA modification; N(7)-methylguanine-tRNA biosynthesis. Its function is as follows. Catalyzes the formation of N(7)-methylguanine at position 46 (m7G46) in tRNA. In Albidiferax ferrireducens (strain ATCC BAA-621 / DSM 15236 / T118) (Rhodoferax ferrireducens), this protein is tRNA (guanine-N(7)-)-methyltransferase.